Reading from the N-terminus, the 691-residue chain is Elongation factor G (691 aa).

A tr-type G domain is found at Glu-8–Ile-282. GTP contacts are provided by residues Ala-17 to Thr-24, Asp-81 to His-85, and Asn-135 to Asp-138.

It belongs to the TRAFAC class translation factor GTPase superfamily. Classic translation factor GTPase family. EF-G/EF-2 subfamily.

The protein localises to the cytoplasm. In terms of biological role, catalyzes the GTP-dependent ribosomal translocation step during translation elongation. During this step, the ribosome changes from the pre-translocational (PRE) to the post-translocational (POST) state as the newly formed A-site-bound peptidyl-tRNA and P-site-bound deacylated tRNA move to the P and E sites, respectively. Catalyzes the coordinated movement of the two tRNA molecules, the mRNA and conformational changes in the ribosome. The chain is Elongation factor G from Synechococcus sp. (strain CC9311).